The following is a 130-amino-acid chain: Small ribosomal subunit protein uS11c (130 aa).

This sequence belongs to the universal ribosomal protein uS11 family. As to quaternary structure, part of the 30S ribosomal subunit.

The protein localises to the plastid. It is found in the chloroplast. This is Small ribosomal subunit protein uS11c from Anthoceros angustus (Hornwort).